A 62-amino-acid chain; its full sequence is Beta-defensin 37 (62 aa).

An N-terminal signal peptide occupies residues 1-16 (MKFSYFLLLLLSLSNF). Disulfide bonds link Cys-29-Cys-58, Cys-36-Cys-51, and Cys-41-Cys-59.

It belongs to the beta-defensin family. In terms of tissue distribution, only expressed in epididymis (corpus and cauda).

The protein resides in the secreted. Functionally, has antibacterial activity. This is Beta-defensin 37 (Defb37) from Mus musculus (Mouse).